Here is a 339-residue protein sequence, read N- to C-terminus: Anthranilate phosphoribosyltransferase (339 aa).

Residues Gly-82, Gly-85–Asp-86, Asn-92–Thr-95, Lys-110–Ser-118, and Ser-122 contribute to the 5-phospho-alpha-D-ribose 1-diphosphate site. Gly-82 lines the anthranilate pocket. Residue Ser-94 participates in Mg(2+) binding. Asn-113 lines the anthranilate pocket. Arg-168 is a binding site for anthranilate. Residues Asp-227 and Glu-228 each contribute to the Mg(2+) site.

The protein belongs to the anthranilate phosphoribosyltransferase family. In terms of assembly, homodimer. It depends on Mg(2+) as a cofactor.

It carries out the reaction N-(5-phospho-beta-D-ribosyl)anthranilate + diphosphate = 5-phospho-alpha-D-ribose 1-diphosphate + anthranilate. The protein operates within amino-acid biosynthesis; L-tryptophan biosynthesis; L-tryptophan from chorismate: step 2/5. In terms of biological role, catalyzes the transfer of the phosphoribosyl group of 5-phosphorylribose-1-pyrophosphate (PRPP) to anthranilate to yield N-(5'-phosphoribosyl)-anthranilate (PRA). This chain is Anthranilate phosphoribosyltransferase, found in Ruthia magnifica subsp. Calyptogena magnifica.